The chain runs to 901 residues: Alanine--tRNA ligase (901 aa).

Residues histidine 581, histidine 585, cysteine 684, and histidine 688 each contribute to the Zn(2+) site.

It belongs to the class-II aminoacyl-tRNA synthetase family. Requires Zn(2+) as cofactor.

The protein localises to the cytoplasm. It carries out the reaction tRNA(Ala) + L-alanine + ATP = L-alanyl-tRNA(Ala) + AMP + diphosphate. Functionally, catalyzes the attachment of alanine to tRNA(Ala) in a two-step reaction: alanine is first activated by ATP to form Ala-AMP and then transferred to the acceptor end of tRNA(Ala). Also edits incorrectly charged Ser-tRNA(Ala) and Gly-tRNA(Ala) via its editing domain. This Mycobacterium marinum (strain ATCC BAA-535 / M) protein is Alanine--tRNA ligase.